An 87-amino-acid polypeptide reads, in one-letter code: Apolipoprotein C-I (87 aa).

The first 26 residues, 1-26 (MRLFLSLPVLVVVLAMVLEGPAPAQA), serve as a signal peptide directing secretion.

Belongs to the apolipoprotein C1 family.

It is found in the secreted. Its function is as follows. Inhibitor of lipoprotein binding to the low density lipoprotein (LDL) receptor, LDL receptor-related protein, and very low density lipoprotein (VLDL) receptor. Associates with high density lipoproteins (HDL) and the triacylglycerol-rich lipoproteins in the plasma and makes up about 10% of the protein of the VLDL and 2% of that of HDL. Appears to interfere directly with fatty acid uptake and is also the major plasma inhibitor of cholesteryl ester transfer protein (CETP). Binds free fatty acids and reduces their intracellular esterification. Modulates the interaction of APOE with beta-migrating VLDL and inhibits binding of beta-VLDL to the LDL receptor-related protein. The sequence is that of Apolipoprotein C-I (APOC1) from Zalophus californianus (California sealion).